Reading from the N-terminus, the 720-residue chain is Engulfment and cell motility protein 3 (720 aa).

The region spanning 307–479 (EQRDQLQALR…VVREQLARTL (173 aa)) is the ELMO domain. One can recognise a PH domain in the interval 542-664 (RLCEGMLFRK…TDGLSALLGS (123 aa)). The short motif at 696–706 (PEQPPPVPPPP) is the SH3-binding element.

As to quaternary structure, probably interacts directly with the SH3-domain of DOCK1 via its SH3-binding site. Part of a complex with DOCK1 and RAC1. Interacts with ADGRB3.

The protein localises to the cytoplasm. Its function is as follows. Involved in cytoskeletal rearrangements required for phagocytosis of apoptotic cells and cell motility. Acts in association with DOCK1 and CRK. Was initially proposed to be required in complex with DOCK1 to activate Rac Rho small GTPases. May enhance the guanine nucleotide exchange factor (GEF) activity of DOCK1. The chain is Engulfment and cell motility protein 3 (Elmo3) from Mus musculus (Mouse).